Reading from the N-terminus, the 110-residue chain is UPF0060 membrane protein ASA_2267 (110 aa).

The next 4 membrane-spanning stretches (helical) occupy residues 7–27 (IGLFLITAVAEIVGCYLPYLW), 33–53 (SVWLLLPAGLSLVLFAWLLSL), 63–83 (AAYGGVYIFVAILWLWLVDGI), and 87–107 (LWDLVGSLVALFGMAIIMFAP).

The protein belongs to the UPF0060 family.

It localises to the cell inner membrane. The chain is UPF0060 membrane protein ASA_2267 from Aeromonas salmonicida (strain A449).